Consider the following 200-residue polypeptide: LexA repressor (200 aa).

A DNA-binding region (H-T-H motif) is located at residues 29 to 48 (IRDIARAFRITPRGAIVHLN). Catalysis depends on for autocatalytic cleavage activity residues Ser120 and Lys158.

This sequence belongs to the peptidase S24 family. As to quaternary structure, homodimer.

It catalyses the reaction Hydrolysis of Ala-|-Gly bond in repressor LexA.. Functionally, represses a number of genes involved in the response to DNA damage (SOS response), including recA and lexA. In the presence of single-stranded DNA, RecA interacts with LexA causing an autocatalytic cleavage which disrupts the DNA-binding part of LexA, leading to derepression of the SOS regulon and eventually DNA repair. The chain is LexA repressor from Pseudothermotoga lettingae (strain ATCC BAA-301 / DSM 14385 / NBRC 107922 / TMO) (Thermotoga lettingae).